The chain runs to 250 residues: Small ribosomal subunit protein uS2 (250 aa).

Belongs to the universal ribosomal protein uS2 family.

In Polaromonas naphthalenivorans (strain CJ2), this protein is Small ribosomal subunit protein uS2.